The chain runs to 563 residues: Arginine--tRNA ligase (563 aa).

Residues 122–132 (PNIAKPISMGH) carry the 'HIGH' region motif.

It belongs to the class-I aminoacyl-tRNA synthetase family. Monomer.

It localises to the cytoplasm. The catalysed reaction is tRNA(Arg) + L-arginine + ATP = L-arginyl-tRNA(Arg) + AMP + diphosphate. The sequence is that of Arginine--tRNA ligase from Enterococcus faecalis (strain ATCC 700802 / V583).